The following is a 915-amino-acid chain: Coronin-7 (915 aa).

WD repeat units follow at residues 75-115 (CHSD…QALP), 124-163 (PEDA…PLTE), 166-205 (THGD…EAAQ), and 209-253 (AHEN…AALT). Residues 396–456 (TSCLAPPAEL…TSPSQRSLQS (61 aa)) are disordered. 2 stretches are compositionally biased toward low complexity: residues 399-413 (LAPP…AQPA) and 420-450 (SSTP…TSPS). A phosphoserine mark is found at Ser-453 and Ser-456. Lys-463 participates in a covalent cross-link: Glycyl lysine isopeptide (Lys-Gly) (interchain with G-Cter in ubiquitin). 4 WD repeats span residues 533 to 573 (QNGV…LQEV), 583 to 623 (GHTE…EQLR), 626 to 665 (GHRD…EPLQ), and 719 to 759 (DVAP…PFFL). Residues 850–915 (PPGMTPVSQA…FEGVDEDEWD (66 aa)) are disordered. The segment covering 859–869 (APREAPARRAP) has biased composition (low complexity). Residues 874–886 (LEEKSDQQKKEEL) are compositionally biased toward basic and acidic residues. Ser-905 is modified (phosphoserine).

This sequence belongs to the WD repeat coronin family. As to quaternary structure, interacts with clathrin adapter AP1 complex. This interaction takes place at Golgi membranes and not AP1-positive endosomal membranes. Interacts (when ubiquitinated at Lys-463) with EPS15. The membrane-associated form is phosphorylated on tyrosine residues. In terms of processing, ubiquitinated via 'Lys-33'-linked ubiquitin chains by the BCR(KLHL20) E3 ubiquitin ligase complex: 'Lys-33'-linked ubiquitination promotes interaction with EPS15 and facilitates actin polymerization at the trans-Golgi network, thereby facilitating post-Golgi trafficking. Deubiquitinated by ZRANB1/TRABID.

The protein localises to the golgi apparatus membrane. The protein resides in the golgi apparatus. Its subcellular location is the trans-Golgi network. It is found in the cytoplasmic vesicle. It localises to the cytoplasm. The protein localises to the cytosol. F-actin regulator involved in anterograde Golgi to endosome transport: upon ubiquitination via 'Lys-33'-linked ubiquitin chains by the BCR(KLHL20) E3 ubiquitin ligase complex, interacts with EPS15 and localizes to the trans-Golgi network, where it promotes actin polymerization, thereby facilitating post-Golgi trafficking. May play a role in the maintenance of the Golgi apparatus morphology. The chain is Coronin-7 (CORO7) from Bos taurus (Bovine).